Consider the following 198-residue polypeptide: Protein FAM219B (198 aa).

2 disordered regions span residues 1 to 58 (MATA…KRGP) and 83 to 146 (RRKG…EQVN). Residues serine 14, serine 91, serine 125, and serine 127 each carry the phosphoserine modification. Positions 134-146 (RYSSGYSSAEQVN) are enriched in polar residues.

This sequence belongs to the FAM219 family.

In Homo sapiens (Human), this protein is Protein FAM219B (FAM219B).